The chain runs to 197 residues: MPSRTSANLILASQSAYRQAQLRQLGLPFTTAAAYINEEVLTGENAQQTAVRLAKTKTLKIAKEHANDYIIGCDQTAGLDDIILGKPGTEENAFNQLMQCQARTVTFYSALCVYSPENKQLIQHCTQTKVSFRELNESQIRSYIQRESPLDCAGSFKCEGLGISLFESIQSDDPSALIGLPLIALCTALQHTPFQPI.

The active-site Proton acceptor is the Asp74.

This sequence belongs to the Maf family. YceF subfamily. Requires a divalent metal cation as cofactor.

Its subcellular location is the cytoplasm. The catalysed reaction is N(7)-methyl-GTP + H2O = N(7)-methyl-GMP + diphosphate + H(+). Nucleoside triphosphate pyrophosphatase that hydrolyzes 7-methyl-GTP (m(7)GTP). May have a dual role in cell division arrest and in preventing the incorporation of modified nucleotides into cellular nucleic acids. In Saccharophagus degradans (strain 2-40 / ATCC 43961 / DSM 17024), this protein is 7-methyl-GTP pyrophosphatase.